The sequence spans 180 residues: Regulator of G-protein signaling 8 (180 aa).

Serine 26 carries the phosphoserine modification. In terms of domain architecture, RGS spans 56–171; the sequence is SFDVLLSHKY…FLRSKMYLDL (116 aa).

In terms of assembly, interacts with GNAO1 and GNAI3. In terms of tissue distribution, expressed at high levels in brain. Very little expression detected in other tissues. Detected in Purkinje cells in the cerebellum.

It localises to the cell membrane. The protein resides in the membrane. It is found in the perikaryon. Its subcellular location is the cell projection. The protein localises to the dendrite. It localises to the nucleus. Regulates G protein-coupled receptor signaling cascades, including signaling via muscarinic acetylcholine receptor CHRM2 and dopamine receptor DRD2. Inhibits signal transduction by increasing the GTPase activity of G protein alpha subunits, thereby driving them into their inactive GDP-bound form. Modulates the activity of potassium channels that are activated in response to DRD2 and CHRM2 signaling. This is Regulator of G-protein signaling 8 (Rgs8) from Rattus norvegicus (Rat).